A 117-amino-acid polypeptide reads, in one-letter code: UPF0251 protein cbdbA217 (117 aa).

It belongs to the UPF0251 family.

In Dehalococcoides mccartyi (strain CBDB1), this protein is UPF0251 protein cbdbA217.